The sequence spans 1128 residues: Adipocyte enhancer-binding protein 1 (1128 aa).

The first 25 residues, 1-25 (MAAVRTASLLCGLLALLALCPEGSP), serve as a signal peptide directing secretion. The interval 40–368 (GFLSEFETQS…PRKGEELEEE (329 aa)) is disordered. Residues 77 to 109 (PRADAEAPPEKNKDKEKKGKKDKGPKAAKHLEG) are compositionally biased toward basic and acidic residues. Residues 113-163 (PTKKPKEKPPKATKKPKEKPPKATKKPKEKPPKATKKPKEKPPKATKRPSA) are compositionally biased toward basic residues. Polar residues-rich tracts occupy residues 178-187 (RSLTSPSNPG) and 198-209 (TSLNTWQGQGEE). The span at 249 to 261 (RQKQPRPTPSRKR) shows a compositional bias: basic residues. Basic and acidic residues-rich tracts occupy residues 267-282 (PEEK…EVDP) and 327-363 (EELK…RKGE). Residues 375-532 (IKCPPIGMES…LCMRLEVLGC (158 aa)) enclose the F5/8 type C domain. Residues 382-547 (MESHRIEDNQ…YSYYAQNEVV (166 aa)) form a required for DNA-binding and interaction with NFKBIA region. 2 interaction with MAPK1 and MAPK3 regions span residues 413 to 616 (AGAN…TAGM) and 998 to 1128 (DPSR…FGDF). Asn-520 is a glycosylation site (N-linked (GlcNAc...) asparagine). Positions 547–977 (VTTDSLDFRH…TQCNFILARS (431 aa)) are interaction with PTEN. A Peptidase M14 domain is found at 555-896 (RHHSYKDMRQ…EALLTFMEQV (342 aa)). Residues 933 to 1128 (DYWRILNPGE…ETYTVNFGDF (196 aa)) are required for transcriptional repression. Positions 1027–1056 (LRRLNSTTGPATSPTPALTLPPSPTPGSTS) are disordered. A compositionally biased stretch (low complexity) spans 1030-1044 (LNSTTGPATSPTPAL).

This sequence belongs to the peptidase M14 family. Interacts with different types of collagen, including collagens I, III, and V. Interacts with GNG5, NFKBIA, MAPK1, MAPK3 and PTEN. May interact with calmodulin. Interaction with MAPK1 may stimulate DNA-binding. Binds to DNA in vitro. Phosphorylated by MAPK1 in vitro. As to expression, expressed in aorta.

Its subcellular location is the secreted. In terms of biological role, as a positive regulator of collagen fibrillogenesis, it is probably involved in the organization and remodeling of the extracellular matrix. May positively regulate MAP-kinase activity in adipocytes, leading to enhanced adipocyte proliferation and reduced adipocyte differentiation. May also positively regulate NF-kappa-B activity in macrophages by promoting the phosphorylation and subsequent degradation of I-kappa-B-alpha (NFKBIA), leading to enhanced macrophage inflammatory responsiveness. Can act as a transcriptional repressor. In Rattus norvegicus (Rat), this protein is Adipocyte enhancer-binding protein 1 (Aebp1).